Consider the following 924-residue polypeptide: Protein argonaute 4 (924 aa).

Disordered regions lie at residues Met-1–Val-37 and Thr-159–Asn-185. A compositionally biased stretch (pro residues) spans Leu-26 to Val-37. The segment covering Asn-162–Pro-173 has biased composition (low complexity). In terms of domain architecture, PAZ spans Pro-292–Pro-408. In terms of domain architecture, Piwi spans Phe-577–Lys-885. Positions Asp-584–Tyr-591 match the Nuclear localization signal motif.

Belongs to the argonaute family. Ago subfamily. As to quaternary structure, interacts with NRPE1 (via C-terminus). Binding to NRPE1 is required for its function in RdDM. Interacts with turnip crinkle virus (TCV) capsid protein P38; this interaction inhibits probably RNA silencing ability of AGO4. Interacts with SDE3. Binds to RDM3. Binds chromatin at loci subject to transcriptional silencing. Interacts with MBD6. Expressed in embryos, mature leaves, vascular tissue of the sepals, stamens and stigma, at the tip of the style and siliques.

It localises to the nucleus. It is found in the nucleolus. The protein localises to the nucleoplasm. Its subcellular location is the cajal body. In terms of biological role, together with RDM3, required for transcriptional gene silencing (TGS) by DNA methylation and repressive histone modifications (H3K9me2) of several chromatin loci. Component of the RISC complex that associate with the small interfering RNA (siRNA) pathway involved in direct cytosine methylation at endogenous DNA repeats. Forms a AGO4/NRPE1/siRNA complex in cajal body, facilitating its function in RNA-directed gene silencing of target loci. Required for CpNpG and asymmetric DNA methylation as well as histone H3 'Lys-9' methylation (H3K9me) at SUP and SN1 loci. May be not required for CpG methylation. Required for the production and maintenance of retrotransposon SN1 and Copia and ribosomal 5S 25 nucleotide siRNAs specialized in gene silencing at chromatin level. Involved in de novo methylation of FWA gene and required for the maintenance of RNA-directed DNA methylation (RdDM) triggered by inverted repeat transgenes. Interacts with miRNA miR390 and miR172, targeting respectively TAS3 and AP2 mRNAs, and mediates cleavage of miRNA targets. Associates mainly with small RNAs of 24 nucleotide in length and preferentially recruits small RNAs with a 5' terminal adenosine. Targeted by the turnip yellows virus (TuYV) protein P0 (via F-box-like domain) for probable proteasome degradation and thereby inactivating AGO4 function in RNA silencing. Required for resistance to the bacterial pathogen P.syringae. Works independently of the RdDM pathway in mediating resistance to P.syringae. RdDM is involved in viral genome methylation as an epigenetic defense against geminiviruses. This is Protein argonaute 4 from Arabidopsis thaliana (Mouse-ear cress).